Here is a 329-residue protein sequence, read N- to C-terminus: Flotillin-like protein FloA (329 aa).

2 helical membrane-spanning segments follow: residues 5–25 (IFLL…LSFI) and 27–47 (LGLW…TLVG).

It belongs to the flotillin-like FloA family. Homooligomerizes.

The protein localises to the cell membrane. Its subcellular location is the membrane raft. In terms of biological role, found in functional membrane microdomains (FMM) that may be equivalent to eukaryotic membrane rafts. FMMs are highly dynamic and increase in number as cells age. Flotillins are thought to be important factors in membrane fluidity. The protein is Flotillin-like protein FloA of Thermoanaerobacter sp. (strain X514).